A 393-amino-acid polypeptide reads, in one-letter code: Sugar efflux transporter B (393 aa).

12 consecutive transmembrane segments (helical) span residues 13–33 (FDLT…AGAL), 51–71 (AMVG…SQFL), 82–102 (KSLI…FAWN), 106–126 (FVLL…NPQM), 152–172 (VSLA…GFSF), 174–194 (VMYL…WLFL), 219–239 (LLLF…IINM), 253–273 (LAGV…LIAG), 283–303 (FLMR…LMAH), 306–326 (VILL…GGIG), 344–364 (LYTN…GIVA), and 366–386 (IWNY…TLFC).

Belongs to the major facilitator superfamily. Set transporter family.

It is found in the cell inner membrane. Involved in the efflux of sugars. The physiological role may be the detoxification of non-metabolizable sugar analogs. Can transport lactose and glucose. The sequence is that of Sugar efflux transporter B (setB) from Escherichia coli (strain K12).